Here is a 213-residue protein sequence, read N- to C-terminus: MGREFIDIFEDWAPLYDDSVTGKDAQYEKVFEHYDQILSEVVENSQDKVLEFGVGTGNLTKQLLNAGKTVIGIEPSTAMREIAKKKLPGITILDGDFINFPTLTMPIDSIVSTYAFHHLTDEEKEQAIKQFHEVLQPEGMVVFGDTMFETKEAKQNQIDLARKQGFKALAEDLEREYYPIIKTVRNAFEKYNFHVSFKQMNDFVWIISAKKLA.

S-adenosyl-L-methionine is bound by residues G53, E74, and D96.

The protein belongs to the methyltransferase superfamily. YrrT family.

Functionally, could be a S-adenosyl-L-methionine-dependent methyltransferase. This is an uncharacterized protein from Oceanobacillus iheyensis (strain DSM 14371 / CIP 107618 / JCM 11309 / KCTC 3954 / HTE831).